Here is a 331-residue protein sequence, read N- to C-terminus: Cytosolic Fe-S cluster assembly factor CFD1 (331 aa).

25-32 (GKGGVGKS) contributes to the ATP binding site. 2 residues coordinate [4Fe-4S] cluster: cysteine 211 and cysteine 214.

This sequence belongs to the Mrp/NBP35 ATP-binding proteins family. NUBP2/CFD1 subfamily. Heterotetramer of 2 NBP35 and 2 CFD1 chains. Requires [4Fe-4S] cluster as cofactor.

It is found in the cytoplasm. Component of the cytosolic iron-sulfur (Fe/S) protein assembly (CIA) machinery. Required for maturation of extramitochondrial Fe-S proteins. The NBP35-CFD1 heterotetramer forms a Fe-S scaffold complex, mediating the de novo assembly of an Fe-S cluster and its transfer to target apoproteins. This is Cytosolic Fe-S cluster assembly factor CFD1 from Cryptococcus neoformans var. neoformans serotype D (strain B-3501A) (Filobasidiella neoformans).